Consider the following 205-residue polypeptide: Bacterial microcompartment protein trimer-1 (205 aa).

Positions 1–20 (MDHAPERFDATPPAGEPDRP) are disordered. 2 consecutive BMC domains span residues 21–106 (ALGV…RFLD) and 120–204 (SVII…GRLF).

It belongs to the bacterial microcompartments protein family. As to quaternary structure, homotrimerizes to form a pseudohexamer. Unlike its paralogs BMC-T2 and BMC-T3, the pseudohexamers do not stack. The concave side faces outward, with the N- and C-terminii exposed to the cytoplasm.

It is found in the bacterial microcompartment. A minor component of the bacterial microcompartment (BMC) shell. Expression of 5 proteins in E.coli (BMC-H (Hoch_5815), BMC-P (Hoch_5814), and 3 BMC-T (Hoch_5812, Hoch_5816, Hoch_3341)) forms 40 nm artificial BMCs with a molecular mass of 6.5 MDa. This protein does not form stacked pseudohexamers in the BMC. There are 20 BMC-T pseudohexamers per BMC, composed of mixed BMC-T1, BMC-T2 and BMC-T3. The shell facets are 20-30 Angstroms thick, with 1 of BMC-T trimers protruding to the exterior. This chain is Bacterial microcompartment protein trimer-1, found in Haliangium ochraceum (strain DSM 14365 / JCM 11303 / SMP-2).